The chain runs to 408 residues: Probable E3 ubiquitin-protein ligase makorin-1 (408 aa).

C3H1-type zinc fingers lie at residues 34–61 (WTRHVTCRYFIHGVCKEGINCRYSHDLA) and 63–90 (SRSAMICRYFQRGCCAYGDRCRYEHNKP). Disordered stretches follow at residues 90 to 114 (PLQEDPTGDTCTAPSESLPEPSGNI) and 154 to 173 (EAYTQGTVKPDEGREEPADP). Over residues 162–173 (KPDEGREEPADP) the composition is skewed to basic and acidic residues. The C3H1-type 3 zinc finger occupies 174–201 (ELKKQLCPYAAMGECRYGENCVYLHGDP). A makorin-type Cys-His region spans residues 202 to 229 (CDMCGLQVLHPVDTCQRSQHIKSCIEAH). The RING-type zinc finger occupies 247–301 (CGICMEVVYEKTNPSERRFGILSNCSHSYCLKCIRKWRSAKQFESKIIKSCPECR). Residues 330–359 (AMSSKSCRYFDEGRGTCPFGGNCFYRHAYP) form a C3H1-type 4 zinc finger. Positions 363–408 (IEEPQPRQKSGMSSRYRIPSPSAGIDFGSLTSERAETRLRTRKTKL) are disordered.

The catalysed reaction is S-ubiquitinyl-[E2 ubiquitin-conjugating enzyme]-L-cysteine + [acceptor protein]-L-lysine = [E2 ubiquitin-conjugating enzyme]-L-cysteine + N(6)-ubiquitinyl-[acceptor protein]-L-lysine.. It participates in protein modification; protein ubiquitination. E3 ubiquitin ligase catalyzing the covalent attachment of ubiquitin moieties onto substrate proteins. In Xenopus laevis (African clawed frog), this protein is Probable E3 ubiquitin-protein ligase makorin-1 (mkrn1).